The chain runs to 41 residues: MGKKHRNRITGQKKNNHIPEKDIIAAEEAHGKEYSAAKRKP.

Positions 1 to 41 (MGKKHRNRITGQKKNNHIPEKDIIAAEEAHGKEYSAAKRKP) are disordered. The segment covering 17–41 (HIPEKDIIAAEEAHGKEYSAAKRKP) has biased composition (basic and acidic residues).

This is an uncharacterized protein from Bacillus subtilis (strain 168).